The chain runs to 733 residues: Catalase-peroxidase (733 aa).

Residues W96–Y219 constitute a cross-link (tryptophyl-tyrosyl-methioninium (Trp-Tyr) (with M-245)). The active-site Proton acceptor is the H97. Positions Y219 to M245 form a cross-link, tryptophyl-tyrosyl-methioninium (Tyr-Met) (with W-96). H260 is a binding site for heme b.

Belongs to the peroxidase family. Peroxidase/catalase subfamily. Homodimer or homotetramer. Heme b serves as cofactor. Post-translationally, formation of the three residue Trp-Tyr-Met cross-link is important for the catalase, but not the peroxidase activity of the enzyme.

It catalyses the reaction H2O2 + AH2 = A + 2 H2O. The enzyme catalyses 2 H2O2 = O2 + 2 H2O. In terms of biological role, bifunctional enzyme with both catalase and broad-spectrum peroxidase activity. The polypeptide is Catalase-peroxidase (Geobacter sp. (strain M21)).